Here is a 302-residue protein sequence, read N- to C-terminus: Heme A synthase (302 aa).

At 1–6 (MNKALK) the chain is on the cytoplasmic side. A helical transmembrane segment spans residues 7-27 (GLGIITTIAMLFVLIGGALVT). At 28 to 61 (KTGSGMGCGRSWPLCNGSIFPALTLESIIEWSHR) the chain is on the extracellular side. Cysteines 35 and 42 form a disulfide. Glu57 is a catalytic residue. A heme o-binding site is contributed by His60. The chain crosses the membrane as a helical span at residues 62–82 (FVSGTSGVLVLALAIWTWKKI). Over 83–91 (GHIRETKFL) the chain is Cytoplasmic. The chain crosses the membrane as a helical span at residues 92–112 (AVMSVVFLILQALLGAAAVVF). The Extracellular segment spans residues 113–120 (GSSALIMA). The chain crosses the membrane as a helical span at residues 121-141 (LHFGISLISFASVLLLTLLVF). Residue His122 participates in heme o binding. Residues 142–158 (EADSKQKSESFYIGKTM) lie on the Cytoplasmic side of the membrane. Residues 159–179 (QFHMIGIIIYTYVVVYTGAYV) traverse the membrane as a helical segment. At 180–208 (RHTSSSLACLDFPMCSTENGWLPGKFHEW) the chain is on the extracellular side. Cys188 and Cys194 are oxidised to a cystine. Residues 209–229 (VQMGHRAAALLLFAWIIAAAV) form a helical membrane-spanning segment. Residue His213 coordinates heme b. At 230–242 (HAARQYKNQKRIY) the chain is on the cytoplasmic side. Residues 243–263 (WGWMISLILIILQAASGIAVV) form a helical membrane-spanning segment. The Extracellular portion of the chain corresponds to 264-272 (YSRLDLGFA). Residues 273–293 (LAHAFFISCLFGILCYFLLLV) traverse the membrane as a helical segment. Residue His275 participates in heme b binding. The Cytoplasmic segment spans residues 294-302 (ARYRRQVQK).

This sequence belongs to the COX15/CtaA family. Type 1 subfamily. In terms of assembly, interacts with CtaB. Heme b is required as a cofactor.

It localises to the cell membrane. The enzyme catalyses Fe(II)-heme o + 2 A + H2O = Fe(II)-heme a + 2 AH2. Its pathway is porphyrin-containing compound metabolism; heme A biosynthesis; heme A from heme O: step 1/1. Its function is as follows. Catalyzes the conversion of heme O to heme A by two successive hydroxylations of the methyl group at C8. The first hydroxylation forms heme I, the second hydroxylation results in an unstable dihydroxymethyl group, which spontaneously dehydrates, resulting in the formyl group of heme A. The polypeptide is Heme A synthase (Bacillus licheniformis (strain ATCC 14580 / DSM 13 / JCM 2505 / CCUG 7422 / NBRC 12200 / NCIMB 9375 / NCTC 10341 / NRRL NRS-1264 / Gibson 46)).